Here is a 247-residue protein sequence, read N- to C-terminus: Bidirectional sugar transporter SWEET1 (247 aa).

Over 1 to 6 (MNIAHT) the chain is Extracellular. The helical transmembrane segment at 7–27 (IFGVFGNATALFLFLAPSITF) threads the bilayer. The region spanning 7–94 (IFGVFGNATA…LIFLFYAPKK (88 aa)) is the MtN3/slv 1 domain. Over 28–41 (KRIIKNKSTEQFSG) the chain is Cytoplasmic. A helical membrane pass occupies residues 42-62 (IPYPMTLLNCLLSAWYGLPFV). Topologically, residues 63 to 71 (SKDNTLVST) are extracellular. The helical transmembrane segment at 72–92 (INGTGAVIETVYVLIFLFYAP) threads the bilayer. The Cytoplasmic segment spans residues 93–98 (KKEKIK). Residues 99–119 (IFGIFSCVLAVFATVALVSLF) form a helical membrane-spanning segment. Topologically, residues 120–127 (ALQGNGRK) are extracellular. A helical transmembrane segment spans residues 128 to 148 (LFCGLAATVFSIIMYASPLSI). The MtN3/slv 2 domain occupies 130-213 (CGLAATVFSI…ILYFIYCGNK (84 aa)). Over 149–162 (MRLVVKTKSVEFMP) the chain is Cytoplasmic. Residues 163–183 (FFLSLFVFLCGTSWFVYGLIG) traverse the membrane as a helical segment. The Extracellular segment spans residues 184–187 (RDPF). A helical transmembrane segment spans residues 188–208 (VAIPNGFGCALGTLQLILYFI). Over 209 to 247 (YCGNKGEKSADAQKDEKSVEMKDDEKKQNVVNGKQDLQV) the chain is Cytoplasmic. Residues 221–236 (QKDEKSVEMKDDEKKQ) show a composition bias toward basic and acidic residues. The tract at residues 221–247 (QKDEKSVEMKDDEKKQNVVNGKQDLQV) is disordered. Over residues 237 to 247 (NVVNGKQDLQV) the composition is skewed to polar residues.

Belongs to the SWEET sugar transporter family. Forms homooligomers and heterooligomers with SWEET9, SWEET11, SWEET13, SWEET15, SWEET16 and SWEET17. Mainly expressed in flowers.

Its subcellular location is the cell membrane. The protein localises to the endoplasmic reticulum membrane. Mediates both low-affinity uptake and efflux of sugar across the plasma membrane. Can transport glucose, and, to a lower extent, mannose, fructose and galactose. The polypeptide is Bidirectional sugar transporter SWEET1 (Arabidopsis thaliana (Mouse-ear cress)).